A 534-amino-acid polypeptide reads, in one-letter code: tRNA uridine(34) acetyltransferase (534 aa).

The interval 70–330 (KPVRTISGVA…GEFKPYREEE (261 aa)) is radical S-adenosyl-L-methionine (rSAM). The 272-residue stretch at 73–344 (RTISGVAVVA…ISYAKSIMPK (272 aa)) folds into the Radical SAM core domain. 3 residues coordinate [4Fe-4S] cluster: C90, C95, and C98. An acetyl-CoA-binding site is contributed by K150. A disulfide bridge connects residues C384 and C389. The region spanning 387–534 (IRCREVGHVY…RVGAYMGKEL (148 aa)) is the N-acetyltransferase domain. Acetyl-CoA is bound by residues 461–464 (QLHV), 485–487 (YGR), and Y518.

This sequence belongs to the ELP3 family. Requires [4Fe-4S] cluster as cofactor.

It carries out the reaction uridine(34) in tRNA + acetyl-CoA + S-adenosyl-L-methionine + H2O = 5-(carboxymethyl)uridine(34) in tRNA + 5'-deoxyadenosine + L-methionine + CoA + 2 H(+). It functions in the pathway tRNA modification. Its function is as follows. tRNA uridine(34) acetyltransferase, which mediates formation of carboxymethyluridine in the wobble base at position 34 in tRNAs. The proposed mechanism is the following: (i) recruits S-adenosyl-L-methionine and cleaves it to generate a 5'-deoxyadenosine radical (5'-dA) in the radical S-adenosyl-L-methionine (rSAM) region, (ii) hydrolyzes acetyl-CoA in the N-acetyltransferase domain and (iii) an acetyl radical is formed by the products of the two domains and (iv) is transferred onto the C5 position of uridine(34) in the bound tRNA molecule. Does not show protein lysine acetyltransferase activity. The polypeptide is tRNA uridine(34) acetyltransferase (Methanocaldococcus infernus (strain DSM 11812 / JCM 15783 / ME)).